Here is a 153-residue protein sequence, read N- to C-terminus: Jacalin-related lectin Calsepa (153 aa).

An N-acetylalanine modification is found at Ala-2. In terms of domain architecture, Jacalin-type lectin spans 6-152 (DTISGPWGNN…VDAIGTYNRH (147 aa)). 3 N-glycan binding regions span residues 17-18 (GN), 95-96 (DN), and 140-144 (GYYVD).

The protein belongs to the jacalin lectin family. In terms of assembly, homodimer. Post-translationally, not glycosylated. In terms of tissue distribution, rhizome (at protein level). Detected in the cortex and the pith of rhizome. Not detected in vascular tissues, pericycle, endodermis or rhizodermis.

The protein resides in the cytoplasm. Hemagglutinating activity is most inhibited by methyl alpha-mannopyranoside. This activity is inhibited to a less extent (about a third of the inhibition of that of methyl alpha-mannopyranoside) by methyl alpha-glucoside, other alpha-glucosides, such as maltose, isomaltose, panose or palatinose, and alpha-glucosides modified at the second position, such as methyl 2-deoxy-alpha-arabinoglucopyranoside or methyl 2-acetamido-2-deoxy alpha-glucopyranoside. Mildly inhibited by free monosaccharides, with glucose presenting at least 20-fold less inhibitory effect on hemagglutinating activity than mannose. Glycoproteins are somewhat inhibitory, the best being asialothyroglobulin and ovomucoid. Not inhibited by isomaltitol, sucrose or trehalose. In terms of biological role, mannose-binding lectin. Preferentially binds mannose at concentrations ranging between 5 and 25 mM, but also binds glucose. Has a marked preference for methylated sugar derivatives, such as alpha-MeMan and alpha-MeGlc, at concentration down to 5 mM. Binds to N-glycans, but not to glycolipid-type or other type of glycans. Binds N-linked high-mannose-type glycans. Has a preference for smaller (Man(2)-Man(6)) high-mannose-type glycans to larger (Man(7)-Man(9)) ones. Recognizes both alpha1-6 extended and alpha1-3 extended monoantennary glycans. The addition of alpha1-2Man to the Man-alpha1-3Man-beta branch results in a significant loss of affinity, but beta1-2GlcNAc has some affinity. Has less affinity for biantennary glycans. However, affinity is significant for the biantennary complex-type N-glycans with bisecting GlcNAc. No affinity is observed for tri- and tetra-antennary glycans. Binds bisected glycans of the mouse brain. Selectively binds to bisecting N-glycans which are in back-fold conformation, and does not favor a glycan with an extend conformation. Has hemagglutinating activity against rabbit erythrocytes at 0.3 ug/ml and against trypsin-treated human erythrocytes at 5 ug/ml. Has mitogenic activity in murine cells. This chain is Jacalin-related lectin Calsepa, found in Calystegia sepium (Hedge bindweed).